The chain runs to 1383 residues: WD repeat-containing protein dyf-2 (1383 aa).

WD repeat units follow at residues 32-71, 72-112, 118-157, 160-198, and 337-376; these read EHGSGPIIHRWRPNGHTVAVACANNTVIYYDKKGNVIDAL, NPTG…TDTV, SSKELPTCLAWSPSTPTLVIGNNAGNIVVYNHRTSRRIAV, KHQRSVTQITVTPEDYVISCSDDNTLSVTTLEGTTVSTT, and ETEKNLSEIEVTEDGQLVAVSSQSGVLSIFVTKMPTLAAS. 7 TPR repeats span residues 756–789, 810–847, 885–918, 940–973, 996–1029, 1031–1053, and 1064–1097; these read EEKNLLHAQIYTILSRYDDAEQLYLESSRPMEAL, PKEIPYLSKEYAQELELTGDHANSLANYEKGVMENPQN, RVVKRDCAIILEQMKQYTEAAQLYEVGLFYDRAA, PKIHIQYGKIMEKEKKYKVAVKCYETGRDYDNQV, IEGAKLVAKFFVKLGDYNSAIQFLVMSQCVQEAF, LAEKNNAVREYAKAIEQHGNISQ, and VNDMFMAAKFYTQAGQYNNAINLLFKNGDDENCV.

As to quaternary structure, component of the IFT complex A (IFT-A) composed of at least che-11, daf-10, dyf-2, ift-139, ift-43 and ifta-1. Expressed in ciliated sensory neurons.

It is found in the cell projection. It localises to the cilium. In terms of biological role, component of the IFT complex A (IFT-A), a complex required for retrograde ciliary transport. Moves along the ciliary axoneme and is involved in the assembly, localization and the movement of other intraflagellar transport (IFT) proteins along the cilia axoneme. May also associate with the BBSome complex in order to mediate ciliary transport. Regulates cilia biogenesis, morphology and sensitivity to environmental cues. This is WD repeat-containing protein dyf-2 from Caenorhabditis elegans.